Here is a 457-residue protein sequence, read N- to C-terminus: Methylenetetrahydrofolate--tRNA-(uracil-5-)-methyltransferase TrmFO (457 aa).

FAD is bound at residue 12–17; sequence GGGLAG.

It belongs to the MnmG family. TrmFO subfamily. FAD serves as cofactor.

The protein resides in the cytoplasm. The catalysed reaction is uridine(54) in tRNA + (6R)-5,10-methylene-5,6,7,8-tetrahydrofolate + NADH + H(+) = 5-methyluridine(54) in tRNA + (6S)-5,6,7,8-tetrahydrofolate + NAD(+). The enzyme catalyses uridine(54) in tRNA + (6R)-5,10-methylene-5,6,7,8-tetrahydrofolate + NADPH + H(+) = 5-methyluridine(54) in tRNA + (6S)-5,6,7,8-tetrahydrofolate + NADP(+). In terms of biological role, catalyzes the folate-dependent formation of 5-methyl-uridine at position 54 (M-5-U54) in all tRNAs. This Myxococcus xanthus (strain DK1622) protein is Methylenetetrahydrofolate--tRNA-(uracil-5-)-methyltransferase TrmFO.